The sequence spans 133 residues: Rodlin protein RdlB (133 aa).

The signal sequence occupies residues 1 to 28 (MIKKVVAYAAIAASVMGASAAAAPQAMA). Amyloid-forming stretches follow at residues 45–57 (QYFG…GNMS) and 59–70 (QMALIQGSFNKP). The tract at residues 45–70 (QYFGNSMTTGNMSPQMALIQGSFNKP) is required for amyloid formation.

The protein belongs to the rodlin family.

The protein resides in the secreted. It localises to the cell wall. Its subcellular location is the spore wall. In terms of biological role, forms part of the rodlet layer on the spore surface; despite their high similarity both RdlA and RdlB are required for rodlet formation. Plays a role in cell adhesion to polystyrene plates. Forms amyloid-like fibrils in vitro composed of stacked beta-sheets. This Streptomyces coelicolor (strain ATCC BAA-471 / A3(2) / M145) protein is Rodlin protein RdlB.